A 227-amino-acid chain; its full sequence is Lipoprotein-releasing system ATP-binding protein LolD (227 aa).

The region spanning 6–227 is the ABC transporter domain; the sequence is LVLDDIQKSY…RLDEGVLVSA (222 aa). An ATP-binding site is contributed by 43–50; the sequence is APSGAGKS.

This sequence belongs to the ABC transporter superfamily. Lipoprotein translocase (TC 3.A.1.125) family. The complex is composed of two ATP-binding proteins (LolD) and two transmembrane proteins (LolC and LolE).

Its subcellular location is the cell inner membrane. Its function is as follows. Part of the ABC transporter complex LolCDE involved in the translocation of mature outer membrane-directed lipoproteins, from the inner membrane to the periplasmic chaperone, LolA. Responsible for the formation of the LolA-lipoprotein complex in an ATP-dependent manner. This is Lipoprotein-releasing system ATP-binding protein LolD from Jannaschia sp. (strain CCS1).